We begin with the raw amino-acid sequence, 121 residues long: Small ribosomal subunit protein uS13 (121 aa).

A disordered region spans residues 90 to 121 (RHRRGLPTRGQNTKNNARTRKGPTKTVAGKKK). The span at 106-121 (ARTRKGPTKTVAGKKK) shows a compositional bias: basic residues.

This sequence belongs to the universal ribosomal protein uS13 family. As to quaternary structure, part of the 30S ribosomal subunit. Forms a loose heterodimer with protein S19. Forms two bridges to the 50S subunit in the 70S ribosome.

Functionally, located at the top of the head of the 30S subunit, it contacts several helices of the 16S rRNA. In the 70S ribosome it contacts the 23S rRNA (bridge B1a) and protein L5 of the 50S subunit (bridge B1b), connecting the 2 subunits; these bridges are implicated in subunit movement. Contacts the tRNAs in the A and P-sites. This chain is Small ribosomal subunit protein uS13, found in Enterococcus faecalis (strain ATCC 700802 / V583).